Consider the following 427-residue polypeptide: Vitamin D3 receptor (427 aa).

The nuclear receptor DNA-binding region spans 21 to 96 (PRICGVCGDR…IGMMKEFILT (76 aa)). Positions 24, 27, 41, 44, 60, 66, 76, and 79 each coordinate Zn(2+). NR C4-type zinc fingers lie at residues 24 to 44 (CGVC…CEGC) and 60 to 79 (CPFN…CQAC). The hinge stretch occupies residues 97-126 (DEEVQRKREMILKRKEEEALKDSLRPKLSE). In terms of domain architecture, NR LBD spans 127–423 (EQQRIIAILL…LTPLVLEVFG (297 aa)). Tyrosine 143 is a calcitriol binding site. The interval 149-201 (DFGQFRPPVRGDEEEGTLPSRSSSAHAPSFSGSSSSSCSDQYTSSPDTMEPAS) is disordered. Residues 168–193 (SRSSSAHAPSFSGSSSSSCSDQYTSS) show a composition bias toward low complexity. Serine 237 lines the calcitriol pocket. Positions 246 to 264 (KMIPGFRDLTAEDQIVLLK) are interaction with coactivator LXXLL motif. Arginine 274, serine 278, histidine 305, and histidine 397 together coordinate calcitriol. The 9aaTAD motif lies at 416–424 (PLVLEVFGN).

The protein belongs to the nuclear hormone receptor family. NR1 subfamily. Homodimer in the absence of bound vitamin D3. Heterodimer with RXRA after vitamin D3 binding. Interacts with MED1, NCOA1, NCOA2, NCOA3 and NCOA6 coactivators, leading to a strong increase of transcription of target genes. Interacts with the corepressor NCOR1. Interacts with SNW1. Interacts with IRX4, the interaction does not affect its transactivation activity. Interacts with CRY1. Interacts with CRY2 in a ligand-dependent manner. In terms of processing, ubiquitinated by UBR5, leading to its degradation: UBR5 specifically recognizes and binds ligand-bound VDR when it is not associated with coactivators (NCOAs). In presence of NCOAs, the UBR5-degron is not accessible, preventing its ubiquitination and degradation.

It localises to the nucleus. The protein localises to the cytoplasm. In terms of biological role, nuclear receptor for calcitriol, the active form of vitamin D3 which mediates the action of this vitamin on cells. Enters the nucleus upon vitamin D3 binding where it forms heterodimers with the retinoid X receptor/RXR. The VDR-RXR heterodimers bind to specific response elements on DNA and activate the transcription of vitamin D3-responsive target genes. Plays a central role in calcium homeostasis. Also functions as a receptor for the secondary bile acid lithocholic acid (LCA) and its metabolites. This is Vitamin D3 receptor (VDR) from Sus scrofa (Pig).